The primary structure comprises 228 residues: Enolase-phosphatase E1 (228 aa).

The protein belongs to the HAD-like hydrolase superfamily. MasA/MtnC family. As to quaternary structure, monomer. The cofactor is Mg(2+).

The catalysed reaction is 5-methylsulfanyl-2,3-dioxopentyl phosphate + H2O = 1,2-dihydroxy-5-(methylsulfanyl)pent-1-en-3-one + phosphate. The protein operates within amino-acid biosynthesis; L-methionine biosynthesis via salvage pathway; L-methionine from S-methyl-5-thio-alpha-D-ribose 1-phosphate: step 3/6. It participates in amino-acid biosynthesis; L-methionine biosynthesis via salvage pathway; L-methionine from S-methyl-5-thio-alpha-D-ribose 1-phosphate: step 4/6. Its function is as follows. Bifunctional enzyme that catalyzes the enolization of 2,3-diketo-5-methylthiopentyl-1-phosphate (DK-MTP-1-P) into the intermediate 2-hydroxy-3-keto-5-methylthiopentenyl-1-phosphate (HK-MTPenyl-1-P), which is then dephosphorylated to form the acireductone 1,2-dihydroxy-3-keto-5-methylthiopentene (DHK-MTPene). This chain is Enolase-phosphatase E1, found in Picosynechococcus sp. (strain ATCC 27264 / PCC 7002 / PR-6) (Agmenellum quadruplicatum).